A 55-amino-acid polypeptide reads, in one-letter code: Variant surface glycoprotein ETAT 1.2 (55 aa).

The N-linked (GlcNAc...) asparagine glycan is linked to Asn34. The GPI-anchor amidated asparagine moiety is linked to residue Asn38. Residues 39–55 (NSFAIKTSTLLLAVLLF) constitute a propeptide, removed in mature form.

It localises to the cell membrane. Its function is as follows. VSG forms a coat on the surface of the parasite. The trypanosome evades the immune response of the host by expressing a series of antigenically distinct VSGs from an estimated 1000 VSG genes. The chain is Variant surface glycoprotein ETAT 1.2 from Trypanosoma brucei rhodesiense.